Here is a 124-residue protein sequence, read N- to C-terminus: CLAVATA3/ESR (CLE)-related protein 45 (124 aa).

Residues 1-20 (MLGSSTRSMFFLLVCIGLLA) form the signal peptide. N-linked (GlcNAc...) asparagine glycosylation is found at Asn25 and Asn96. Residues 71–109 (LNKNRRVLEEVNKDKIKAEETQERKNKTEDSFKSSKRRV) are a coiled coil. The span at 87-103 (KAEETQERKNKTEDSFK) shows a compositional bias: basic and acidic residues. The segment at 87-124 (KAEETQERKNKTEDSFKSSKRRVRRGSDPIHNKAQPFS) is disordered.

It belongs to the CLV3/ESR signal peptide family. As to quaternary structure, binds to SKM1 present in the pollen grain, particularly under relatively high temperature (at 30 degrees Celsius). Interacts with BAM3, especially in roots. As to expression, expressed at low levels in flowers, especially in pistils. Present in vascular tissues. In roots, confined to protophloem and sieve element precursor cells.

The protein resides in the secreted. The protein localises to the extracellular space. Its function is as follows. Extracellular signal peptide that regulates cell fate. Represses root apical meristem maintenance. Represses protophloem differentiation in a BAM3-dependent manner. BRX, BAM3, and CLE45 act together to regulate the transition of protophloem cells from proliferation to differentiation, thus impinging on postembryonic growth capacity of the root meristem; this signaling pathway requires CRN and CLV2 and involves MAKR5 for its transduction/amplification. Triggers the accumulation of MAKR5 in developing sieve elements in a BAM3-dependent manner. Prevents, in a dose-dependent manner, auxin response in the root meristem thus leading in the repression of protophloem differentiation and periclinal sieve element precursor cell division. Promotes pollen tube growth prolongation in a SKM1 and SKM2-dependent manner, especially under relatively high temperature (at 30 degrees Celsius), thus conferring tolerance against high temperature probably through the maintenance of mitochondrial activity. Alleviates mitochondrial decay pollen tube in vitro culture. The polypeptide is CLAVATA3/ESR (CLE)-related protein 45 (Arabidopsis thaliana (Mouse-ear cress)).